The primary structure comprises 322 residues: Mas-related G-protein coupled receptor member X4 (322 aa).

The Extracellular portion of the chain corresponds to 1-31 (MDPTVPVFGTKLTPINGREETPCYNQTLSFT). N25 is a glycosylation site (N-linked (GlcNAc...) asparagine). Residues 32 to 52 (VLTCIISLVGLTGNAVVLWLL) traverse the membrane as a helical segment. Residues 53–60 (GYRMRRNA) are Cytoplasmic-facing. Residues 61 to 81 (VSIYILNLAAADFLFLSFQII) traverse the membrane as a helical segment. Residues 82-96 (RLPLRLINISHLIRK) are Extracellular-facing. A glycan (N-linked (GlcNAc...) asparagine) is linked at N89. Residues 97-117 (ILVSVMTFPYFTGLSMLSAIS) traverse the membrane as a helical segment. Residues 118 to 137 (TERCLSVLWPIWYRCRRPTH) are Cytoplasmic-facing. The chain crosses the membrane as a helical span at residues 138 to 158 (LSAVVCVLLWGLSLLFSMLEW). Over 159 to 177 (RFCDFLFSGADSSWCETSD) the chain is Extracellular. A helical membrane pass occupies residues 178-198 (FIPVAWLIFLCVVLCVSSLVL). Residues 199 to 218 (LVRILCGSRKMPLTRLYVTI) lie on the Cytoplasmic side of the membrane. The chain crosses the membrane as a helical span at residues 219-239 (LLTVLVFLLCGLPFGILGALI). At 240–254 (YRMHLNLEVLYCHVY) the chain is on the extracellular side. The chain crosses the membrane as a helical span at residues 255–275 (LVCMSLSSLNSSANPIIYFFV). Topologically, residues 276–322 (GSFRQRQNRQNLKLVLQRALQDKPEVDKGEGQLPEESLELSGSRLGP) are cytoplasmic. Residues 299–322 (PEVDKGEGQLPEESLELSGSRLGP) form a disordered region.

Belongs to the G-protein coupled receptor 1 family. Mas subfamily. Uniquely localized in a subset of small dorsal root and trigeminal sensory neurons.

The protein localises to the cell membrane. Orphan receptor. Probably involved in the function of nociceptive neurons. May regulate nociceptor function and/or development, including the sensation or modulation of pain. Potently activated by enkephalins. The polypeptide is Mas-related G-protein coupled receptor member X4 (MRGPRX4) (Homo sapiens (Human)).